A 450-amino-acid polypeptide reads, in one-letter code: Exodeoxyribonuclease 7 large subunit (450 aa).

Belongs to the XseA family. In terms of assembly, heterooligomer composed of large and small subunits.

The protein localises to the cytoplasm. The enzyme catalyses Exonucleolytic cleavage in either 5'- to 3'- or 3'- to 5'-direction to yield nucleoside 5'-phosphates.. In terms of biological role, bidirectionally degrades single-stranded DNA into large acid-insoluble oligonucleotides, which are then degraded further into small acid-soluble oligonucleotides. The protein is Exodeoxyribonuclease 7 large subunit of Listeria monocytogenes serotype 4b (strain CLIP80459).